We begin with the raw amino-acid sequence, 317 residues long: 4-hydroxy-3-methylbut-2-enyl diphosphate reductase (317 aa).

Cys-12 contacts [4Fe-4S] cluster. (2E)-4-hydroxy-3-methylbut-2-enyl diphosphate is bound by residues His-41 and His-74. Dimethylallyl diphosphate-binding residues include His-41 and His-74. His-41 and His-74 together coordinate isopentenyl diphosphate. Cys-96 lines the [4Fe-4S] cluster pocket. Position 124 (His-124) interacts with (2E)-4-hydroxy-3-methylbut-2-enyl diphosphate. His-124 lines the dimethylallyl diphosphate pocket. His-124 serves as a coordination point for isopentenyl diphosphate. The active-site Proton donor is the Glu-126. Thr-168 provides a ligand contact to (2E)-4-hydroxy-3-methylbut-2-enyl diphosphate. Cys-198 lines the [4Fe-4S] cluster pocket. The (2E)-4-hydroxy-3-methylbut-2-enyl diphosphate site is built by Ser-226, Ser-227, Asn-228, and Ser-270. Dimethylallyl diphosphate-binding residues include Ser-226, Ser-227, Asn-228, and Ser-270. Ser-226, Ser-227, Asn-228, and Ser-270 together coordinate isopentenyl diphosphate.

This sequence belongs to the IspH family. Requires [4Fe-4S] cluster as cofactor.

It catalyses the reaction isopentenyl diphosphate + 2 oxidized [2Fe-2S]-[ferredoxin] + H2O = (2E)-4-hydroxy-3-methylbut-2-enyl diphosphate + 2 reduced [2Fe-2S]-[ferredoxin] + 2 H(+). It carries out the reaction dimethylallyl diphosphate + 2 oxidized [2Fe-2S]-[ferredoxin] + H2O = (2E)-4-hydroxy-3-methylbut-2-enyl diphosphate + 2 reduced [2Fe-2S]-[ferredoxin] + 2 H(+). It functions in the pathway isoprenoid biosynthesis; dimethylallyl diphosphate biosynthesis; dimethylallyl diphosphate from (2E)-4-hydroxy-3-methylbutenyl diphosphate: step 1/1. Its pathway is isoprenoid biosynthesis; isopentenyl diphosphate biosynthesis via DXP pathway; isopentenyl diphosphate from 1-deoxy-D-xylulose 5-phosphate: step 6/6. Catalyzes the conversion of 1-hydroxy-2-methyl-2-(E)-butenyl 4-diphosphate (HMBPP) into a mixture of isopentenyl diphosphate (IPP) and dimethylallyl diphosphate (DMAPP). Acts in the terminal step of the DOXP/MEP pathway for isoprenoid precursor biosynthesis. This is 4-hydroxy-3-methylbut-2-enyl diphosphate reductase from Chromohalobacter salexigens (strain ATCC BAA-138 / DSM 3043 / CIP 106854 / NCIMB 13768 / 1H11).